A 139-amino-acid polypeptide reads, in one-letter code: Putative flagella-related protein F (139 aa).

A signal peptide spans 1 to 18; that stretch reads MGFSSVVGATVMIIALLV. Position 19 is an N-acetylcysteine (Cys19). Cys19 carries the S-archaeol cysteine lipid modification.

It to M.voltae FlaF.

It localises to the archaeal flagellum. Its subcellular location is the membrane. The protein is Putative flagella-related protein F (flaF) of Methanocaldococcus jannaschii (strain ATCC 43067 / DSM 2661 / JAL-1 / JCM 10045 / NBRC 100440) (Methanococcus jannaschii).